Reading from the N-terminus, the 138-residue chain is Large-conductance mechanosensitive channel (138 aa).

A run of 2 helical transmembrane segments spans residues 19-39 (VGVI…GDVI) and 81-101 (GSFL…FLVI).

It belongs to the MscL family. In terms of assembly, homopentamer.

Its subcellular location is the cell inner membrane. Functionally, channel that opens in response to stretch forces in the membrane lipid bilayer. May participate in the regulation of osmotic pressure changes within the cell. This is Large-conductance mechanosensitive channel from Bradyrhizobium diazoefficiens (strain JCM 10833 / BCRC 13528 / IAM 13628 / NBRC 14792 / USDA 110).